A 213-amino-acid polypeptide reads, in one-letter code: GTP cyclohydrolase 1 (213 aa).

The Zn(2+) site is built by cysteine 104, histidine 107, and cysteine 175.

The protein belongs to the GTP cyclohydrolase I family. In terms of assembly, toroid-shaped homodecamer, composed of two pentamers of five dimers.

It carries out the reaction GTP + H2O = 7,8-dihydroneopterin 3'-triphosphate + formate + H(+). Its pathway is cofactor biosynthesis; 7,8-dihydroneopterin triphosphate biosynthesis; 7,8-dihydroneopterin triphosphate from GTP: step 1/1. This is GTP cyclohydrolase 1 from Brucella anthropi (strain ATCC 49188 / DSM 6882 / CCUG 24695 / JCM 21032 / LMG 3331 / NBRC 15819 / NCTC 12168 / Alc 37) (Ochrobactrum anthropi).